We begin with the raw amino-acid sequence, 3707 residues long: Basement membrane-specific heparan sulfate proteoglycan core protein (3707 aa).

An N-terminal signal peptide occupies residues 1–21 (MGQRAVGSLLLGLLLHARLLA). 3 O-linked (Xyl...) (heparan sulfate) serine glycosylation sites follow: Ser65, Ser71, and Ser76. The region spanning 80 to 191 (QMVYFRALVN…WGFKFRRLGT (112 aa)) is the SEA domain. Asn89 carries an N-linked (GlcNAc...) asparagine glycan. LDL-receptor class A domains follow at residues 195 to 234 (FPRV…ELNC), 281 to 319 (GPSA…ELGC), 320 to 359 (ASPP…EANC), and 360 to 403 (SVKQ…EFGC). Intrachain disulfides connect Cys199–Cys212, Cys206–Cys225, Cys219–Cys234, Cys285–Cys297, Cys292–Cys310, Cys304–Cys319, Cys325–Cys337, Cys332–Cys350, Cys344–Cys359, Cys368–Cys381, Cys375–Cys394, Cys388–Cys403, and Cys428–Cys479. N-linked (GlcNAc...) asparagine glycosylation occurs at Asn358. The 101-residue stretch at 404–504 (MPPQVVTPPQ…VLELVPQRGP (101 aa)) folds into the Ig-like C2-type 1 domain. The 10-residue stretch at 521–530 (CFCFGVTNVC) folds into the Laminin EGF-like 1; first part domain. The 193-residue stretch at 538-730 (DQIRLSFDQP…IHGRAHSVEE (193 aa)) folds into the Laminin IV type A 1 domain. A glycan (N-linked (GlcNAc...) asparagine) is linked at Asn554. The region spanning 731-763 (CRCPIGYSGLSCESCDAHFTRVPGGPYLGTCSG) is the Laminin EGF-like 1; second part domain. Disulfide bonds link Cys764–Cys773, Cys766–Cys780, Cys783–Cys792, Cys795–Cys811, Cys814–Cys829, Cys816–Cys839, Cys842–Cys851, Cys854–Cys869, Cys879–Cys892, Cys894–Cys903, and Cys906–Cys921. Laminin EGF-like domains are found at residues 764 to 813 (CNCN…ACRP) and 814 to 871 (CPCP…KCRP). One can recognise a Laminin EGF-like 4; truncated domain in the interval 879–923 (CDERGSLGTSGETCRCKNNVVGRLCNECSDGSFHLSKQNPDGCLK). A Laminin EGF-like 5; first part domain is found at 924 to 933 (CFCMGVSRQC). Positions 941-1125 (AQVLGASEQP…GQDSAREVEQ (185 aa)) constitute a Laminin IV type A 2 domain. Positions 1126–1158 (CTCPPGYRGPSCQDCDTGYTRVPSGLYLGTCER) constitute a Laminin EGF-like 5; second part domain. 12 cysteine pairs are disulfide-bonded: Cys1159–Cys1168, Cys1161–Cys1175, Cys1178–Cys1187, Cys1190–Cys1206, Cys1209–Cys1224, Cys1211–Cys1234, Cys1237–Cys1246, Cys1249–Cys1263, Cys1275–Cys1287, Cys1277–Cys1293, Cys1295–Cys1304, and Cys1307–Cys1322. Laminin EGF-like domains follow at residues 1159–1208 (CNCH…DCQP), 1209–1265 (CPCY…PCHR), and 1275–1324 (CGCD…GCLP). Positions 1325-1334 (CFCMGVTQQC) constitute a Laminin EGF-like 9; first part domain. The Laminin IV type A 3 domain maps to 1344–1529 (ISTHFAPGDF…SGPRALEVEE (186 aa)). In terms of domain architecture, Laminin EGF-like 9; second part spans 1530–1562 (CRCPPGYVGLSCQDCAPGYTRTGSGLYLGQCEL). Disulfide bonds link Cys1563–Cys1572, Cys1565–Cys1579, Cys1582–Cys1591, Cys1594–Cys1610, Cys1613–Cys1628, Cys1615–Cys1638, Cys1641–Cys1650, and Cys1653–Cys1668. 2 Laminin EGF-like domains span residues 1563 to 1612 (CECN…DCQP) and 1613 to 1670 (CACP…RCQP). Ig-like C2-type domains are found at residues 1677 to 1771 (EVQI…KPIM), 1772 to 1865 (VTVE…STAP), 1866 to 1954 (VASI…GGSG), 1955 to 2049 (PRVQ…PAPA), 2050 to 2148 (SPAP…PGVV), 2149 to 2244 (PPIR…PAPG), 2245 to 2343 (LAQP…RLRS), 2344 to 2436 (PVIS…PPTV), 2437 to 2532 (SVLP…APGT), 2533 to 2619 (PQVQ…VESP), 2620 to 2720 (PYAT…GGST), 2721 to 2809 (PTVQ…ALPS), 2810 to 2895 (VLIN…LVQA), and 2896 to 2980 (LPQI…LQVP). The interval 1713 to 1733 (DGRPLPSSAQQRHQGSELHFP) is disordered. 3 disulfides stabilise this stretch: Cys1792–Cys1839, Cys1886–Cys1932, and Cys1976–Cys2021. Residues 2039–2061 (SPSTNSPPAPASPAPIRIESSSS) are disordered. Residues 2052–2061 (APIRIESSSS) are compositionally biased toward low complexity. 3 disulfide bridges follow: Cys2073/Cys2118, Cys2170/Cys2215, and Cys2268/Cys2313. N-linked (GlcNAc...) asparagine glycans are attached at residues Asn2336, Asn2394, and Asn2427. Cys2365 and Cys2413 are oxidised to a cystine. 2 disulfide bridges follow: Cys2456-Cys2506 and Cys2554-Cys2599. N-linked (GlcNAc...) asparagine glycosylation is present at Asn2600. A disulfide bridge connects residues Cys2641 and Cys2686. Intrachain disulfides connect Cys2831–Cys2876 and Cys2917–Cys2962. In terms of domain architecture, Laminin G-like 1 spans 2984-3162 (IPYFTQTPYS…VNLTTHGISH (179 aa)). Asn3098 and Asn3154 each carry an N-linked (GlcNAc...) asparagine glycan. Intrachain disulfides connect Cys3137–Cys3163, Cys3166–Cys3177, Cys3171–Cys3187, Cys3204–Cys3216, and Cys3229–Cys3238. Residues 3163 to 3241 (CPTCQDRPCQ…GRSGVRCEEG (79 aa)) form the EGF-like domain. In terms of domain architecture, Laminin G-like 2 spans 3245 to 3425 (TTPSMSGAGS…VGQCYDSSPC (181 aa)). N-linked (GlcNAc...) asparagine glycosylation is present at Asn3385. 7 disulfides stabilise this stretch: Cys3393–Cys3419, Cys3425–Cys3436, Cys3430–Cys3446, Cys3448–Cys3457, Cys3464–Cys3476, Cys3470–Cys3481, and Cys3483–Cys3492. Ser3510 is a glycosylation site (O-linked (Xyl...) (chondroitin sulfate) serine). The Laminin G-like 3 domain occupies 3518-3705 (QYGAYFYDNG…AQAGANTRPC (188 aa)). Residues Asp3574 and Leu3591 each contribute to the Ca(2+) site. The segment at 3615–3617 (LRE) is mediates motor neuron attachment. Residues Ala3641 and Asn3643 each coordinate Ca(2+). Cys3671 and Cys3705 form a disulfide bridge. A disordered region spans residues 3680-3707 (ARPGAPPPQPLDLQHRAQAGANTRPCPS).

In terms of assembly, has a strong tendency to aggregate in dimers or stellate structures. Interacts with other basement membrane components such as laminin, prolargin and collagen type IV. Interacts with COL13A1. Interacts with FGFBP1. Interacts with VWA1. Interacts (via C-terminus) with ECM1 (via C-terminus). Interacts with SVEP1. In terms of processing, proteolytic processing produces the C-terminal angiogenic peptide, endorepellin. This peptide can be further processed to produce the LG3 peptide. Post-translationally, O-glycosylated. Contains three heparan sulfate chains. Also contains chondroitin sulfate.

Its subcellular location is the secreted. The protein localises to the extracellular space. It is found in the extracellular matrix. It localises to the basement membrane. Integral component of basement membranes. Component of the glomerular basement membrane (GBM), responsible for the fixed negative electrostatic membrane charge, and which provides a barrier which is both size- and charge-selective. It serves as an attachment substrate for cells. Plays essential roles in vascularization. Critical for normal heart development and for regulating the vascular response to injury. Also required for avascular cartilage development. Functionally, anti-angiogenic and anti-tumor peptide that inhibits endothelial cell migration, collagen-induced endothelial tube morphogenesis and blood vessel growth in the chorioallantoic membrane. Blocks endothelial cell adhesion to fibronectin and type I collagen. Anti-tumor agent in neovascularization. Interaction with its ligand, integrin alpha2/beta1, is required for the anti-angiogenic properties. Evokes a reduction in phosphorylation of receptor tyrosine kinases via alpha2/beta1 integrin-mediated activation of the tyrosine phosphatase, PTPN6. In terms of biological role, has anti-angiogenic properties that require binding of calcium ions for full activity. The polypeptide is Basement membrane-specific heparan sulfate proteoglycan core protein (Hspg2) (Mus musculus (Mouse)).